Reading from the N-terminus, the 66-residue chain is Xenoxin-3 (66 aa).

Cystine bridges form between Cys-3–Cys-24, Cys-17–Cys-37, Cys-43–Cys-58, and Cys-59–Cys-64.

In terms of tissue distribution, expressed by the skin dorsal glands.

The protein resides in the secreted. In terms of biological role, lacks alpha-neurotoxic activity, has apparently no antibacterial activity, nor anti-coagulant potency. The chain is Xenoxin-3 from Xenopus laevis (African clawed frog).